The sequence spans 195 residues: MSGSLKSLDKKIAKRRQVYKPVLDNPFTNEAHMWPRVHDQPLIWQLLQSSIINKLIHIQSKENYPWELYTDFNEIVQYLSGAHGNSDPVCLFVCNKDPDVPLVLLQQIPLLCYMAPMTVKLVQLPKSAMDTFKSVSKYGMLLLRCDDRVDKKFVSQIQKNVDLLQFPWLNAIKYRPTSVKLLKTTVPIVSKKRQK.

The protein belongs to the POP3 family. In terms of assembly, component of nuclear RNase P and RNase MRP complexes. RNase P consists of an RNA moiety and at least 9 protein subunits including POP1, POP3, POP4, POP5, POP6, POP7, POP8, RPP1 and RPR2. RNase MRP complex consists of an RNA moiety and at least 10 protein subunits including POP1, POP3, POP4, POP5, POP6, POP7, POP8, RMP1, RPP1 and SNM1, many of which are shared with the RNase P complex.

The protein resides in the nucleus. Functionally, required for processing of 5.8S rRNA (short form) at site A3 and for 5'- and 3'-processing of pre-tRNA. The polypeptide is Ribonucleases P/MRP protein subunit POP3 (POP3) (Saccharomyces cerevisiae (strain ATCC 204508 / S288c) (Baker's yeast)).